The chain runs to 194 residues: Interferon alpha (194 aa).

A signal peptide spans 1–23 (MALPSSFLVALVALGCNSVCSLG). Cystine bridges form between C24–C123 and C52–C166. N-linked (GlcNAc...) asparagine glycosylation is present at N102.

Belongs to the alpha/beta interferon family.

It is found in the secreted. Its function is as follows. Produced by macrophages, IFN-alpha have antiviral activities. Interferon stimulates the production of two enzymes: a protein kinase and an oligoadenylate synthetase. This is Interferon alpha from Felis catus (Cat).